The following is a 343-amino-acid chain: Glyceraldehyde-3-phosphate dehydrogenase 1 (343 aa).

Residues 13–14, Asp35, Arg79, and Ser121 contribute to the NAD(+) site; that span reads RI. D-glyceraldehyde 3-phosphate-binding positions include 154–156, Thr185, 214–215, and Arg237; these read SCT and TG. Cys155 acts as the Nucleophile in catalysis. An NAD(+)-binding site is contributed by Asn319.

It belongs to the glyceraldehyde-3-phosphate dehydrogenase family. As to quaternary structure, homotetramer.

Its subcellular location is the cytoplasm. It carries out the reaction D-glyceraldehyde 3-phosphate + phosphate + NAD(+) = (2R)-3-phospho-glyceroyl phosphate + NADH + H(+). It functions in the pathway carbohydrate degradation; glycolysis; pyruvate from D-glyceraldehyde 3-phosphate: step 1/5. Functionally, catalyzes the oxidative phosphorylation of glyceraldehyde 3-phosphate (G3P) to 1,3-bisphosphoglycerate (BPG) using the cofactor NAD. The first reaction step involves the formation of a hemiacetal intermediate between G3P and a cysteine residue, and this hemiacetal intermediate is then oxidized to a thioester, with concomitant reduction of NAD to NADH. The reduced NADH is then exchanged with the second NAD, and the thioester is attacked by a nucleophilic inorganic phosphate to produce BPG. The polypeptide is Glyceraldehyde-3-phosphate dehydrogenase 1 (gap1) (Trichormus variabilis (strain ATCC 29413 / PCC 7937) (Anabaena variabilis)).